An 841-amino-acid polypeptide reads, in one-letter code: Probable alpha-glucuronidase A (841 aa).

Residues 1-20 (MRGLNLFQLILALLLSMVAA) form the signal peptide. 15 N-linked (GlcNAc...) asparagine glycosylation sites follow: Asn51, Asn76, Asn85, Asn149, Asn222, Asn279, Asn310, Asn343, Asn450, Asn465, Asn527, Asn576, Asn682, Asn723, and Asn732.

The protein belongs to the glycosyl hydrolase 67 family.

The protein resides in the secreted. It catalyses the reaction an alpha-D-glucuronoside + H2O = D-glucuronate + an alcohol. Its function is as follows. Alpha-glucuronidase involved in the hydrolysis of xylan, a major structural heterogeneous polysaccharide found in plant biomass representing the second most abundant polysaccharide in the biosphere, after cellulose. Releases 4-O-methylglucuronic acid from xylan. This is Probable alpha-glucuronidase A (aguA) from Aspergillus niger (strain ATCC MYA-4892 / CBS 513.88 / FGSC A1513).